A 316-amino-acid polypeptide reads, in one-letter code: MLRGWGGPSVGVSMGTALGVLCLCLTGAVEVQVSEDPVVALVDTDATLRCSFSPEPGFSLRQLNLIWQLTDTKQLVHSFTEGRDQGSAYANRTALFPDLLVQGNASLRLQRVRVTDEGSYTCFVSIQDFDSAAVSLQVAAPYSKPSMTLEPNKDLRPGDMVTITCSSYQGYPEAEVFWKDGQGLPLTGNVTTSQMANERGLFDVHSVLRVVLGANGTYSCLVRNPVLQQDAHGSVTITGQPMTFPPEALWVTVGLSVCLVILLVALAFVCWRKIKQSCEEENAGAEDQDGDGEGSKTALRPLKHSENKEDDGQEIA.

Positions 1–28 are cleaved as a signal peptide; sequence MLRGWGGPSVGVSMGTALGVLCLCLTGA. The region spanning 29–139 is the Ig-like V-type domain; the sequence is VEVQVSEDPV…DSAAVSLQVA (111 aa). The Extracellular segment spans residues 29 to 248; it reads VEVQVSEDPV…GQPMTFPPEA (220 aa). Residues Asn-104, Asn-189, and Asn-215 are each glycosylated (N-linked (GlcNAc...) asparagine). The Ig-like C2-type domain occupies 145–238; sequence PSMTLEPNKD…QDAHGSVTIT (94 aa). Cys-165 and Cys-220 are oxidised to a cystine. A helical membrane pass occupies residues 249 to 269; the sequence is LWVTVGLSVCLVILLVALAFV. The Cytoplasmic segment spans residues 270–316; sequence CWRKIKQSCEEENAGAEDQDGDGEGSKTALRPLKHSENKEDDGQEIA. The segment covering 281 to 292 has biased composition (acidic residues); it reads ENAGAEDQDGDG. A disordered region spans residues 281–316; that stretch reads ENAGAEDQDGDGEGSKTALRPLKHSENKEDDGQEIA.

This sequence belongs to the immunoglobulin superfamily. BTN/MOG family. Interacts with TREML2 and this interaction enhances T-cell activation.

Its subcellular location is the membrane. Modulates T-cell-mediated immune responses and the development of acute and chronic transplant rejection. May play a positive regulatory role in bone formation and has a dual role in the bone-immune interface. Induces antitumor immunity as it activates both acquired and innate immunity leading to natural killer cell and CD8 T-cell dependent killing of tumor cells. This chain is CD276 antigen (Cd276), found in Rattus norvegicus (Rat).